The following is a 611-amino-acid chain: DNA mismatch repair protein MutL (611 aa).

It belongs to the DNA mismatch repair MutL/HexB family.

Its function is as follows. This protein is involved in the repair of mismatches in DNA. It is required for dam-dependent methyl-directed DNA mismatch repair. May act as a 'molecular matchmaker', a protein that promotes the formation of a stable complex between two or more DNA-binding proteins in an ATP-dependent manner without itself being part of a final effector complex. The sequence is that of DNA mismatch repair protein MutL from Borrelia garinii subsp. bavariensis (strain ATCC BAA-2496 / DSM 23469 / PBi) (Borreliella bavariensis).